The following is a 91-amino-acid chain: PqqA binding protein (91 aa).

This sequence belongs to the PqqD family. As to quaternary structure, monomer. Interacts with PqqE.

It participates in cofactor biosynthesis; pyrroloquinoline quinone biosynthesis. Its function is as follows. Functions as a PqqA binding protein and presents PqqA to PqqE, in the pyrroloquinoline quinone (PQQ) biosynthetic pathway. This is PqqA binding protein from Pseudomonas putida (strain W619).